Here is a 429-residue protein sequence, read N- to C-terminus: Patatin-like phospholipase domain-containing protein 5 (429 aa).

Positions 12 to 181 (LSFSGAGYLG…SNNLPFADCP (170 aa)) constitute a PNPLA domain. The GXGXXG motif lies at 16-21 (GAGYLG). Residues 47–51 (GSSSG) carry the GXSXG motif. The active-site Nucleophile is serine 49. The active-site Proton acceptor is the aspartate 168. Residues 168–170 (DGA) carry the DGA/G motif.

In terms of tissue distribution, expressed in brain and pituitary gland.

The catalysed reaction is a triacylglycerol + H2O = a diacylglycerol + a fatty acid + H(+). Its function is as follows. Has abundant triacylglycerol lipase activity. This is Patatin-like phospholipase domain-containing protein 5 from Homo sapiens (Human).